The chain runs to 559 residues: Cellulose biosynthesis protein BcsG (559 aa).

Transmembrane regions (helical) follow at residues 34-54, 68-88, 113-133, and 138-158; these read LLWA…AAFL, HWIA…LPGP, FINW…LFLS, and ITVF…AGPS.

It localises to the cell inner membrane. The polypeptide is Cellulose biosynthesis protein BcsG (bcsG) (Escherichia coli (strain K12)).